The following is a 535-amino-acid chain: Probable monogalactosyldiacylglycerol synthase, chloroplastic (535 aa).

Residues 1–113 (MMQHSSSVTQ…KIPLGFASVG (113 aa)) constitute a chloroplast transit peptide.

This sequence belongs to the glycosyltransferase 28 family.

It localises to the plastid. It is found in the chloroplast membrane. It catalyses the reaction a 1,2-diacyl-sn-glycerol + UDP-alpha-D-galactose = a 1,2-diacyl-3-O-(beta-D-galactosyl)-sn-glycerol + UDP + H(+). Involved in the synthesis of the major structural component of photosynthetic membranes. In Nicotiana tabacum (Common tobacco), this protein is Probable monogalactosyldiacylglycerol synthase, chloroplastic (MGD A).